The sequence spans 144 residues: D-aminoacyl-tRNA deacylase (144 aa).

Positions Gly-136 to Pro-137 match the Gly-cisPro motif, important for rejection of L-amino acids motif.

It belongs to the DTD family. Homodimer.

The protein localises to the cytoplasm. The catalysed reaction is glycyl-tRNA(Ala) + H2O = tRNA(Ala) + glycine + H(+). The enzyme catalyses a D-aminoacyl-tRNA + H2O = a tRNA + a D-alpha-amino acid + H(+). Its function is as follows. An aminoacyl-tRNA editing enzyme that deacylates mischarged D-aminoacyl-tRNAs. Also deacylates mischarged glycyl-tRNA(Ala), protecting cells against glycine mischarging by AlaRS. Acts via tRNA-based rather than protein-based catalysis; rejects L-amino acids rather than detecting D-amino acids in the active site. By recycling D-aminoacyl-tRNA to D-amino acids and free tRNA molecules, this enzyme counteracts the toxicity associated with the formation of D-aminoacyl-tRNA entities in vivo and helps enforce protein L-homochirality. This chain is D-aminoacyl-tRNA deacylase, found in Aliivibrio salmonicida (strain LFI1238) (Vibrio salmonicida (strain LFI1238)).